Reading from the N-terminus, the 193-residue chain is Cytidylate kinase (193 aa).

Position 12–20 (12–20) interacts with ATP; it reads GLAGSGTTT.

It belongs to the cytidylate kinase family. Type 2 subfamily.

The protein resides in the cytoplasm. The enzyme catalyses CMP + ATP = CDP + ADP. The catalysed reaction is dCMP + ATP = dCDP + ADP. The chain is Cytidylate kinase from Thermococcus kodakarensis (strain ATCC BAA-918 / JCM 12380 / KOD1) (Pyrococcus kodakaraensis (strain KOD1)).